The primary structure comprises 113 residues: UPF0339 protein MS1092 (113 aa).

2 tandem repeats follow at residues A11 to F59 and N62 to I110.

It belongs to the UPF0339 family. Duplicated subfamily.

This Mannheimia succiniciproducens (strain KCTC 0769BP / MBEL55E) protein is UPF0339 protein MS1092.